A 328-amino-acid chain; its full sequence is Arabinose 5-phosphate isomerase KdsD (328 aa).

Positions 42 to 184 constitute an SIS domain; that stretch reads CEKMFWCKGK…AVALLKARGF (143 aa). Substrate-binding positions include 75-76, His82, His88, 114-123, 148-150, Thr222, and Asp275; these read GT, ALIPVLKRLH, and KVA. His82 contributes to the Zn(2+) binding site. The CBS 1 domain occupies 210–268; it reads MHTGDEIPHVKKTASLRDALLEVTRKNLGMTVICDDNMMIEGIFTDGDLRRVFDMGVDV. A CBS 2 domain is found at 277-328; it reads MTPGGIRVRPGILAVEALNLMQSRHITSVMVADGDHLLGVLHMHDLLRAGVV.

Belongs to the SIS family. GutQ/KpsF subfamily. In terms of assembly, homotetramer.

The enzyme catalyses D-arabinose 5-phosphate = D-ribulose 5-phosphate. It functions in the pathway carbohydrate biosynthesis; 3-deoxy-D-manno-octulosonate biosynthesis; 3-deoxy-D-manno-octulosonate from D-ribulose 5-phosphate: step 1/3. It participates in bacterial outer membrane biogenesis; lipopolysaccharide biosynthesis. In terms of biological role, involved in the biosynthesis of 3-deoxy-D-manno-octulosonate (KDO), a unique 8-carbon sugar component of lipopolysaccharides (LPSs). Catalyzes the reversible aldol-ketol isomerization between D-ribulose 5-phosphate (Ru5P) and D-arabinose 5-phosphate (A5P). This chain is Arabinose 5-phosphate isomerase KdsD (kdsD), found in Shigella flexneri.